Consider the following 418-residue polypeptide: Serine proteinase inhibitor 2.4 (418 aa).

The signal sequence occupies residues 1 to 28 (MAFIAALGIFMAGICPAVLCFPNGTLGR). N-linked (GlcNAc...) asparagine glycans are attached at residues Asn23, Asn38, Asn104, and Asn269.

The protein belongs to the serpin family.

Its subcellular location is the secreted. The sequence is that of Serine proteinase inhibitor 2.4 from Apodemus sylvaticus (European woodmouse).